The primary structure comprises 285 residues: Extracellular metalloprotease SMAC_06893 (285 aa).

An N-terminal signal peptide occupies residues 1–18 (MQIKSLLLAAAAAPAALG). Residue His-197 coordinates Zn(2+). Residue Glu-198 is part of the active site. His-201 serves as a coordination point for Zn(2+). Residues Cys-233 and Cys-260 are joined by a disulfide bond. The N-linked (GlcNAc...) asparagine glycan is linked to Asn-282.

Belongs to the peptidase M43B family.

It is found in the secreted. Secreted metalloproteinase that allows assimilation of proteinaceous substrates. This Sordaria macrospora (strain ATCC MYA-333 / DSM 997 / K(L3346) / K-hell) protein is Extracellular metalloprotease SMAC_06893.